An 89-amino-acid chain; its full sequence is Small ribosomal subunit protein uS14 (89 aa).

This sequence belongs to the universal ribosomal protein uS14 family. As to quaternary structure, part of the 30S ribosomal subunit. Contacts proteins S3 and S10.

Its function is as follows. Binds 16S rRNA, required for the assembly of 30S particles and may also be responsible for determining the conformation of the 16S rRNA at the A site. The sequence is that of Small ribosomal subunit protein uS14 from Phytoplasma australiense.